Consider the following 125-residue polypeptide: Protein Bouncer (125 aa).

The signal sequence occupies residues 1–18 (MGCVLLFLLLVCVPVVLP). 5 disulfides stabilise this stretch: C23–C48, C26–C35, C42–C66, C72–C91, and C92–C97. One can recognise a UPAR/Ly6 domain in the interval 23–98 (CLFCPVTSLN…FSCCGGHYCN (76 aa)). Residue N32 is glycosylated (N-linked (GlcNAc...) asparagine). N84 is a glycosylation site (N-linked (GlcNAc...) asparagine). The GPI-anchor amidated asparagine moiety is linked to residue N98. A propeptide spans 99–125 (SQPRAEPGGRLLLLLLPAAALTAAGAL) (removed in mature form).

Belongs to the SPACA4/bouncer family. As to quaternary structure, interacts with spermatocyte complex composed of izumo1, spaca6 and tmem81. N-glycosylated. Highly expressed in oocytes. Not expressed in testis.

It is found in the cell membrane. Oocyte-expressed fertilization factor that mediates sperm-egg binding and is essential for sperm entry into the egg. Necessary and sufficient to mediate species-specific gamete recognition and fertilization, which is essential for vertebrate species performing external fertilization. External fertilization cannot guarantee that only conspecific sperm reaches the egg by precopulatory mate choice: proteins such as Bouncer can therefore support the selection of conspecific sperm. This Danio rerio (Zebrafish) protein is Protein Bouncer.